We begin with the raw amino-acid sequence, 898 residues long: Eukaryotic translation initiation factor 3 subunit C (898 aa).

Over residues 1–10 the composition is skewed to basic and acidic residues; sequence MSRFFHAKED. Disordered stretches follow at residues 1 to 38 and 162 to 238; these read MSRF…DDLD and VTDY…SVTK. Residues 11–23 show a composition bias toward acidic residues; it reads SDSDTSSSEDEVE. Basic and acidic residues predominate over residues 24–37; that stretch reads DQKVNKSAKFRDDL. Positions 170 to 187 are enriched in acidic residues; that stretch reads DEDGYETPEDEDDDDFGE. Positions 189–202 are enriched in basic and acidic residues; that stretch reads SESKAEKSPGKPSE. Residues 209-218 show a composition bias toward acidic residues; sequence SDSDSDDDDS. A compositionally biased stretch (low complexity) spans 219–228; it reads SNWSSEPESN. The 177-residue stretch at 630 to 806 folds into the PCI domain; the sequence is YHMHINVELM…DCLIMHRVEP (177 aa). Positions 829 to 898 are disordered; the sequence is QILEPRTGRG…RRHPQKPRAF (70 aa). 2 stretches are compositionally biased toward basic and acidic residues: residues 850 to 859 and 866 to 878; these read RNERQGDKQK and GERR…DGKR. Residues 888–898 are compositionally biased toward basic residues; the sequence is QRRHPQKPRAF.

It belongs to the eIF-3 subunit C family. Component of the eukaryotic translation initiation factor 3 (eIF-3) complex.

The protein resides in the cytoplasm. In terms of biological role, component of the eukaryotic translation initiation factor 3 (eIF-3) complex, which is involved in protein synthesis of a specialized repertoire of mRNAs and, together with other initiation factors, stimulates binding of mRNA and methionyl-tRNAi to the 40S ribosome. The eIF-3 complex specifically targets and initiates translation of a subset of mRNAs involved in cell proliferation. This is Eukaryotic translation initiation factor 3 subunit C from Caenorhabditis elegans.